Consider the following 110-residue polypeptide: Protein RnfH (110 aa).

The disordered stretch occupies residues 86–110; sequence RQRRVEKTRKAGSIEGRRWQNKDSR. The span at 100–110 shows a compositional bias: basic and acidic residues; it reads EGRRWQNKDSR.

Belongs to the UPF0125 (RnfH) family.

The chain is Protein RnfH from Paraburkholderia xenovorans (strain LB400).